Here is a 325-residue protein sequence, read N- to C-terminus: Pseudouridylate synthase TRUB2, mitochondrial (325 aa).

The active-site Nucleophile is D101. The disordered stretch occupies residues 292 to 325 (QTEGVSRGNPDREAAEGPIPGPSRGAEGEGELRA).

This sequence belongs to the pseudouridine synthase TruB family.

Its subcellular location is the mitochondrion matrix. The catalysed reaction is a uridine in mRNA = a pseudouridine in mRNA. The enzyme catalyses uridine(55) in tRNA = pseudouridine(55) in tRNA. In terms of biological role, minor enzyme contributing to the isomerization of uridine to pseudouridine (pseudouridylation) of specific mitochondrial mRNAs (mt-mRNAs) such as COXI and COXIII mt-mRNAs, modulating the efficiency of mitochondrial protein synthesis without changes in transcript abundance or stability. Also catalyzes pseudouridylation of some tRNAs, including synthesis of pseudouridine(55) from uracil-55, in the psi GC loop of a subset of tRNAs. The sequence is that of Pseudouridylate synthase TRUB2, mitochondrial from Xenopus tropicalis (Western clawed frog).